Here is a 139-residue protein sequence, read N- to C-terminus: Large ribosomal subunit protein uL16 (139 aa).

The protein belongs to the universal ribosomal protein uL16 family. Part of the 50S ribosomal subunit.

In terms of biological role, binds 23S rRNA and is also seen to make contacts with the A and possibly P site tRNAs. The protein is Large ribosomal subunit protein uL16 of Chlorobium phaeobacteroides (strain BS1).